We begin with the raw amino-acid sequence, 426 residues long: Probable histidine--tRNA ligase (426 aa).

Belongs to the class-II aminoacyl-tRNA synthetase family. As to quaternary structure, homodimer.

It is found in the cytoplasm. The catalysed reaction is tRNA(His) + L-histidine + ATP = L-histidyl-tRNA(His) + AMP + diphosphate + H(+). The protein is Probable histidine--tRNA ligase (hisS) of Tropheryma whipplei (strain TW08/27) (Whipple's bacillus).